The primary structure comprises 41 residues: Large ribosomal subunit protein bL36 (41 aa).

The protein belongs to the bacterial ribosomal protein bL36 family.

The protein is Large ribosomal subunit protein bL36 of Zymomonas mobilis subsp. mobilis (strain ATCC 31821 / ZM4 / CP4).